The chain runs to 528 residues: OLD nuclease (528 aa).

An ATPase domain N-terminus region spans residues 1–153 (MLKRLQVKNF…LAQHLPSIRG (153 aa)). ATP is bound at residue 31–35 (GAGKT). The tract at residues 154–245 (SILGRLLQPV…RESDLTLPGD (92 aa)) is dimerization domain. The segment at 246-369 (ELGLGIQSAI…FDTARNEVLF (124 aa)) is ATPase domain C-terminus. Positions 370-528 (AKRALLVEGY…IRQVTRPMEE (159 aa)) are toprim domain. A divalent metal cation-binding residues include glutamate 377, aspartate 381, aspartate 431, and aspartate 433. The interval 440 to 461 (RADEETRRKQEQENKAEQEKNQ) is disordered. Residues serine 478 and glutamate 480 each contribute to the a divalent metal cation site. The active-site Stabilizes transition state or protonates leaving group is arginine 487.

It belongs to the class 1 OLD nuclease family. Homodimer. It depends on Mg(2+) as a cofactor. Mn(2+) serves as cofactor. The cofactor is Ca(2+).

It catalyses the reaction Exonucleolytic cleavage in the 5'- to 3'-direction to yield nucleoside 5'-phosphates.. Its function is as follows. An exodeoxyribonuclease that degrades linear or supercoiled dsDNA from 5'-3'. Nicks and linearizes circular DNA. Activity is not stimulated by ATP or AMP-PNP, although it has DNA-stimulated ATPase activity. The protein is OLD nuclease of Thermus scotoductus (strain ATCC 700910 / SA-01).